The primary structure comprises 87 residues: Small ribosomal subunit protein bS20 (87 aa).

Residues 1 to 23 form a disordered region; sequence MANHKSAIKRHKQSVKRAARNRA.

It belongs to the bacterial ribosomal protein bS20 family.

Binds directly to 16S ribosomal RNA. The polypeptide is Small ribosomal subunit protein bS20 (Oleidesulfovibrio alaskensis (strain ATCC BAA-1058 / DSM 17464 / G20) (Desulfovibrio alaskensis)).